Here is a 404-residue protein sequence, read N- to C-terminus: Mevalonate kinase (404 aa).

Residues K12, S130, and 135 to 141 (GAGLGSS) each bind ATP. 2 residues coordinate Mg(2+): S141 and E184. D195 serves as the catalytic Proton acceptor.

The protein belongs to the GHMP kinase family. Mevalonate kinase subfamily. In terms of assembly, homodimer. The cofactor is Mg(2+).

The protein localises to the cytoplasm. It localises to the nucleus. The catalysed reaction is (R)-mevalonate + ATP = (R)-5-phosphomevalonate + ADP + H(+). It functions in the pathway isoprenoid biosynthesis; isopentenyl diphosphate biosynthesis via mevalonate pathway; isopentenyl diphosphate from (R)-mevalonate: step 1/3. Farnesyl pyrophosphate and geranyl pyrophosphate inhibit mevalonate kinase by binding competitively at the ATP-binding site. Mevalonate kinase; part of the second module of ergosterol biosynthesis pathway that includes the middle steps of the pathway. Erg12 converts mevalonate into 5-phosphomevalonate. The second module is carried out in the vacuole and involves the formation of farnesyl diphosphate, which is also an important intermediate in the biosynthesis of ubiquinone, dolichol, heme and prenylated proteins. Activity by the mevalonate kinase erg12 first converts mevalonate into 5-phosphomevalonate. 5-phosphomevalonate is then further converted to 5-diphosphomevalonate by the phosphomevalonate kinase erg8. The diphosphomevalonate decarboxylase mvd1 then produces isopentenyl diphosphate. The isopentenyl-diphosphate delta-isomerase idi1 then catalyzes the 1,3-allylic rearrangement of the homoallylic substrate isopentenyl (IPP) to its highly electrophilic allylic isomer, dimethylallyl diphosphate (DMAPP). Finally the farnesyl diphosphate synthase fps1 catalyzes the sequential condensation of isopentenyl pyrophosphate with dimethylallyl pyrophosphate, and then with the resultant geranylpyrophosphate to the ultimate product farnesyl pyrophosphate. This is Mevalonate kinase (erg12) from Schizosaccharomyces pombe (strain 972 / ATCC 24843) (Fission yeast).